A 304-amino-acid polypeptide reads, in one-letter code: MDGFIVIDKPIGLTSHDVVARVRQTLRQKKAGHTGTLDPFATGVLPVAVGEGTKAIPYLDESTKVYRATLILGAATDTQDHTGQVVHAGDWRHLEPQSVRDVVSSFTGKLSQLPPMFSALKRDGVPLYKLARTGREVERERREIEVFSLVVDSIDLPLVTFTLSCSRGTYVRTLAHDMGERLGCGAHLTELRRLSSGPFNLDRAISLERLKELAEAGNLADVLVSPSDALGHLHALPLTAQGAERVRRGMPPCREDVEHGAGTGIPAGTRLRLLRDGIVVAVADSLAGLWSSDTKNLRLLRVFN.

Catalysis depends on Asp38, which acts as the Nucleophile.

This sequence belongs to the pseudouridine synthase TruB family. Type 1 subfamily.

It catalyses the reaction uridine(55) in tRNA = pseudouridine(55) in tRNA. Responsible for synthesis of pseudouridine from uracil-55 in the psi GC loop of transfer RNAs. The polypeptide is tRNA pseudouridine synthase B (Geobacter sulfurreducens (strain ATCC 51573 / DSM 12127 / PCA)).